The following is a 595-amino-acid chain: Aspartate--tRNA(Asp/Asn) ligase (595 aa).

Glu175 contributes to the L-aspartate binding site. The interval 199 to 202 is aspartate; that stretch reads QQYK. Positions 221 and 454 each coordinate L-aspartate. 221–223 lines the ATP pocket; the sequence is RDE. Residue Glu488 participates in ATP binding. Residue Arg495 coordinates L-aspartate. 540-543 is a binding site for ATP; the sequence is GIDR.

It belongs to the class-II aminoacyl-tRNA synthetase family. Type 1 subfamily. As to quaternary structure, homodimer.

It localises to the cytoplasm. The catalysed reaction is tRNA(Asx) + L-aspartate + ATP = L-aspartyl-tRNA(Asx) + AMP + diphosphate. Functionally, aspartyl-tRNA synthetase with relaxed tRNA specificity since it is able to aspartylate not only its cognate tRNA(Asp) but also tRNA(Asn). Reaction proceeds in two steps: L-aspartate is first activated by ATP to form Asp-AMP and then transferred to the acceptor end of tRNA(Asp/Asn). This is Aspartate--tRNA(Asp/Asn) ligase from Brucella anthropi (strain ATCC 49188 / DSM 6882 / CCUG 24695 / JCM 21032 / LMG 3331 / NBRC 15819 / NCTC 12168 / Alc 37) (Ochrobactrum anthropi).